A 311-amino-acid polypeptide reads, in one-letter code: Taste receptor type 2 member 9 (311 aa).

Over 1–9 the chain is Extracellular; sequence MPSTIEAIY. Residues 10 to 32 form a helical membrane-spanning segment; the sequence is IILIAGELTIGIWGNGFIVLVNC. Residues 33–52 lie on the Cytoplasmic side of the membrane; it reads IDWLKRRDVSLIDIILISLA. Residues 53-72 traverse the membrane as a helical segment; the sequence is ISRICLLCVISLDGFFILLF. The Extracellular portion of the chain corresponds to 73–86; that stretch reads PGTYDTNVLESIMD. The helical transmembrane segment at 87–109 threads the bilayer; sequence AVWTFANNSSLWFTSCLSIFYLL. The Cytoplasmic segment spans residues 110 to 128; the sequence is KIANISHPFFFWLKLKINK. The chain crosses the membrane as a helical span at residues 129–146; it reads VILAILLGSFLISLIISF. The Extracellular portion of the chain corresponds to 147 to 179; it reads PINGMWYNLFKVSHEENITWAFKVSTIPGAFKQ. N163 carries N-linked (GlcNAc...) asparagine glycosylation. The chain crosses the membrane as a helical span at residues 180–202; sequence LTLNLGAMVPFILCLISFFLLLF. The Cytoplasmic portion of the chain corresponds to 203-233; it reads SLVRHTKQIQLHATGFRDPSTEAHMRAVKAV. The chain crosses the membrane as a helical span at residues 234–256; it reads IIFLLLLILYYPVFLVMTSSTLI. Over 257–260 the chain is Extracellular; the sequence is PQGK. Residues 261–283 traverse the membrane as a helical segment; sequence LVLMIGDIVTVIFPSSHSFILIM. Residues 284–311 are Cytoplasmic-facing; it reads GNSKLRAAFLKMLRFVKGFLRRRKPFVP.

The protein belongs to the G-protein coupled receptor T2R family.

The protein localises to the membrane. Functionally, gustducin-coupled receptor implicated in the perception of bitter compounds in the oral cavity and the gastrointestinal tract. Signals through PLCB2 and the calcium-regulated cation channel TRPM5. In Macaca mulatta (Rhesus macaque), this protein is Taste receptor type 2 member 9 (TAS2R9).